We begin with the raw amino-acid sequence, 943 residues long: Isoleucine--tRNA ligase (943 aa).

The 'HIGH' region motif lies at 58–68 (PYANGTIHIGH). Glu567 serves as a coordination point for L-isoleucyl-5'-AMP. A 'KMSKS' region motif is present at residues 608-612 (KMSKS). Lys611 is an ATP binding site. Zn(2+) is bound by residues Cys906, Cys909, Cys926, and Cys929.

The protein belongs to the class-I aminoacyl-tRNA synthetase family. IleS type 1 subfamily. Monomer. Requires Zn(2+) as cofactor.

The protein localises to the cytoplasm. The catalysed reaction is tRNA(Ile) + L-isoleucine + ATP = L-isoleucyl-tRNA(Ile) + AMP + diphosphate. Catalyzes the attachment of isoleucine to tRNA(Ile). As IleRS can inadvertently accommodate and process structurally similar amino acids such as valine, to avoid such errors it has two additional distinct tRNA(Ile)-dependent editing activities. One activity is designated as 'pretransfer' editing and involves the hydrolysis of activated Val-AMP. The other activity is designated 'posttransfer' editing and involves deacylation of mischarged Val-tRNA(Ile). This chain is Isoleucine--tRNA ligase, found in Pseudomonas fluorescens (strain SBW25).